The chain runs to 438 residues: Xanthine permease (438 aa).

A run of 13 helical transmembrane segments spans residues 11–31 (LGIQ…LIVG), 41–61 (LTYL…LQVW), 65–85 (FFGI…SPMI), 100–120 (IIAS…LVSF), 121–141 (FPPV…MPVA), 154–174 (FGDL…VLLY), 180–200 (FIKS…AYFM), 220–240 (FYFG…IVAI), 272–292 (AEGL…TAFS), 308–328 (VIVV…IAAF), 331–351 (IIPS…VIAY), 367–387 (LLIV…PDIF), and 396–416 (LLTT…NIVY).

Belongs to the nucleobase:cation symporter-2 (NCS2) (TC 2.A.40) family.

It localises to the cell membrane. In terms of biological role, transport of xanthine in the cell. The protein is Xanthine permease (pbuX) of Bacillus subtilis (strain 168).